The sequence spans 74 residues: Lambda-hexatoxin-Hv1d (74 aa).

A signal peptide spans 1-22 (MNTATCFIVLLVVATVIGGIEA). Residues 23–35 (GESDMRKDVMGLF) constitute a propeptide that is removed on maturation. 4 disulfides stabilise this stretch: C40–C54, C47–C59, C50–C51, and C53–C69.

It belongs to the neurotoxin 11 (kappa toxin) family. Expressed by the venom gland.

Its subcellular location is the secreted. Its function is as follows. This excitatory toxin inhibits insect calcium-activated potassium (KCa) channels (Slo-type). This is Lambda-hexatoxin-Hv1d from Hadronyche versuta (Blue mountains funnel-web spider).